We begin with the raw amino-acid sequence, 79 residues long: Raniseptin-9 (79 aa).

The signal sequence occupies residues 1 to 22 (MAFLKKSLFLVLFLGIVSLSIC). Residues 23–49 (EEEKREGEEEEKQEEENEELSEEELRE) constitute a propeptide that is removed on maturation. The interval 27–46 (REGEEEEKQEEENEELSEEE) is disordered. Residues 30–44 (EEEEKQEEENEELSE) are compositionally biased toward acidic residues.

Belongs to the frog skin active peptide (FSAP) family. Dermaseptin subfamily. Expressed by the skin glands.

The protein resides in the secreted. Functionally, has antibacterial activity. This chain is Raniseptin-9, found in Boana raniceps (Chaco tree frog).